The chain runs to 513 residues: Histidine ammonia-lyase (513 aa).

The segment at residues 142-144 (ASG) is a cross-link (5-imidazolinone (Ala-Gly)). A 2,3-didehydroalanine (Ser) modification is found at Ser-143.

Belongs to the PAL/histidase family. In terms of processing, contains an active site 4-methylidene-imidazol-5-one (MIO), which is formed autocatalytically by cyclization and dehydration of residues Ala-Ser-Gly.

The protein localises to the cytoplasm. The enzyme catalyses L-histidine = trans-urocanate + NH4(+). Its pathway is amino-acid degradation; L-histidine degradation into L-glutamate; N-formimidoyl-L-glutamate from L-histidine: step 1/3. The chain is Histidine ammonia-lyase from Mesorhizobium japonicum (strain LMG 29417 / CECT 9101 / MAFF 303099) (Mesorhizobium loti (strain MAFF 303099)).